The sequence spans 82 residues: Cytochrome c-551 (82 aa).

Heme c is bound by residues Cys-12, Cys-15, His-16, and Met-61.

Post-translationally, binds 1 heme c group covalently per subunit.

Its function is as follows. This is a prokaryotic monoheme cytochrome, unreactive with mitochondrial cytochrome C oxidase or reductase. It functions in nitrite and nitrate respiration in Pseudomonas, but it is also found in other bacteria. The protein is Cytochrome c-551 of Pseudomonas denitrificans.